Here is a 25-residue protein sequence, read N- to C-terminus: M-poneritoxin-Nc2a (25 aa).

Belongs to the ponericin-L family. Expressed by the venom gland.

It is found in the secreted. Its subcellular location is the target cell membrane. In terms of biological role, membrane-perturbating peptide with multiple activities. It is insecticidal, since it induces reversible paralysis in insects (L.cuprina) after 1 hour, but fails to kill them. It shows moderate antibacterial activity against some Gram-positive and Gram-negative bacteria. It is also antiparasitic, since it moderately inhibits the larval development of the major pathogenic nematode of ruminants (H.contortus, IC(50)=23.2 uM), but fails to reduce the motility of adult males of the other nematode B.malayi. It also shows moderate cytotoxic activity against HEK293 cells (EC(50)=48-57 uM) but does not induce hemolysis in human erythrocytes. It also causes a moderate increase in intracellular calcium concentration on neuronal and epithelial cell lines, which supports a non-specific membrane perturbation mechanism of action. In Neoponera commutata (Large hunting ant), this protein is M-poneritoxin-Nc2a.